Consider the following 213-residue polypeptide: Uridine kinase (213 aa).

ATP is bound at residue Gly-13 to Ser-20.

This sequence belongs to the uridine kinase family.

The protein localises to the cytoplasm. It catalyses the reaction uridine + ATP = UMP + ADP + H(+). The enzyme catalyses cytidine + ATP = CMP + ADP + H(+). It functions in the pathway pyrimidine metabolism; CTP biosynthesis via salvage pathway; CTP from cytidine: step 1/3. It participates in pyrimidine metabolism; UMP biosynthesis via salvage pathway; UMP from uridine: step 1/1. In Haemophilus influenzae (strain PittEE), this protein is Uridine kinase.